Consider the following 229-residue polypeptide: Flagellar L-ring protein (229 aa).

The N-terminal stretch at 1 to 25 is a signal peptide; the sequence is MKQVRLPSSATVRAACAVAVAALAG. Residue C26 is the site of N-palmitoyl cysteine attachment. Residue C26 is the site of S-diacylglycerol cysteine attachment.

It belongs to the FlgH family. The basal body constitutes a major portion of the flagellar organelle and consists of four rings (L,P,S, and M) mounted on a central rod.

Its subcellular location is the cell outer membrane. It localises to the bacterial flagellum basal body. Functionally, assembles around the rod to form the L-ring and probably protects the motor/basal body from shearing forces during rotation. In Burkholderia orbicola (strain AU 1054), this protein is Flagellar L-ring protein.